The chain runs to 196 residues: Pyridoxal 5'-phosphate synthase subunit PdxT (196 aa).

Gly47–Ser49 lines the L-glutamine pocket. Residue Cys79 is the Nucleophile of the active site. L-glutamine is bound by residues Arg106 and Ile134–Arg135. Active-site charge relay system residues include His170 and Glu172.

This sequence belongs to the glutaminase PdxT/SNO family. As to quaternary structure, in the presence of PdxS, forms a dodecamer of heterodimers. Only shows activity in the heterodimer.

It catalyses the reaction aldehydo-D-ribose 5-phosphate + D-glyceraldehyde 3-phosphate + L-glutamine = pyridoxal 5'-phosphate + L-glutamate + phosphate + 3 H2O + H(+). The enzyme catalyses L-glutamine + H2O = L-glutamate + NH4(+). The protein operates within cofactor biosynthesis; pyridoxal 5'-phosphate biosynthesis. Catalyzes the hydrolysis of glutamine to glutamate and ammonia as part of the biosynthesis of pyridoxal 5'-phosphate. The resulting ammonia molecule is channeled to the active site of PdxS. This is Pyridoxal 5'-phosphate synthase subunit PdxT from Bacillus subtilis (strain 168).